The primary structure comprises 347 residues: UPF0324 membrane protein Atu0671 (347 aa).

10 helical membrane-spanning segments follow: residues 15-37 (LRWL…AAIL), 50-72 (WLGD…SLPV), 105-127 (AGGL…SYAA), 140-162 (LIAC…AIGA), 172-194 (AFTA…LLGL), 201-223 (IFAG…LGAV), 233-250 (LIRV…SVIH), 263-282 (MVPW…SFGL), 287-309 (LLSP…LGLS), and 322-344 (VIIA…ILLT).

This sequence belongs to the UPF0324 family.

It is found in the cell membrane. This is UPF0324 membrane protein Atu0671 from Agrobacterium fabrum (strain C58 / ATCC 33970) (Agrobacterium tumefaciens (strain C58)).